A 594-amino-acid polypeptide reads, in one-letter code: Sucrose transport protein SUC3 (594 aa).

Serine 2 is modified (N-acetylserine). Residues 2–58 lie on the Cytoplasmic side of the membrane; it reads SDSVSISVPYRNLRKEIELETVTKHRQNESGSSSFSESASPSNHSDSADGESVSKNC. The interval 23-50 is disordered; it reads VTKHRQNESGSSSFSESASPSNHSDSAD. A compositionally biased stretch (low complexity) spans 31-46; that stretch reads SGSSSFSESASPSNHS. A helical membrane pass occupies residues 59-79; it reads SLVTLVLSCTVAAGVQFGWAL. At 80 to 98 the chain is on the extracellular side; sequence QLSLLTPYIQTLGISHAFS. The helical transmembrane segment at 99 to 119 threads the bilayer; sequence SFIWLCGPITGLVVQPFVGIW. Topologically, residues 120–131 are cytoplasmic; that stretch reads SDKCTSKYGRRR. Residues 132 to 152 form a helical membrane-spanning segment; the sequence is PFILVGSFMISIAVIIIGFSA. Residues 153–174 lie on the Extracellular side of the membrane; that stretch reads DIGYLLGDSKEHCSTFKGTRTR. A helical transmembrane segment spans residues 175–195; it reads AAVVFIIGFWLLDLANNTVQG. Over 196-214 the chain is Cytoplasmic; the sequence is PARALLADLSGPDQRNTAN. Residues 215 to 235 traverse the membrane as a helical segment; the sequence is AVFCLWMAIGNILGFSAGASG. Residues 236–257 lie on the Extracellular side of the membrane; sequence KWQEWFPFLTSRACCAACGNLK. A helical membrane pass occupies residues 258 to 278; that stretch reads AAFLLAVVFLTICTLVTIYFA. Topologically, residues 279–365 are cytoplasmic; it reads KEIPFTSNKP…LTSLRHLPPA (87 aa). The helical transmembrane segment at 366 to 386 threads the bilayer; that stretch reads MHSVLIVMALTWLSWFPFFLF. Topologically, residues 387 to 417 are extracellular; sequence DTDWMGREVYHGDPTGDSLHMELYDQGVREG. Residues 418–438 traverse the membrane as a helical segment; sequence ALGLLLNSVVLGISSFLIEPM. Residues 439 to 445 lie on the Cytoplasmic side of the membrane; the sequence is CQRMGAR. The helical transmembrane segment at 446–466 threads the bilayer; that stretch reads VVWALSNFTVFACMAGTAVIS. Over 467-489 the chain is Extracellular; sequence LMSLSDDKNGIEYIMRGNETTRT. Asparagine 484 carries N-linked (GlcNAc...) asparagine glycosylation. A helical transmembrane segment spans residues 490-510; the sequence is AAVIVFALLGFPLAITYSVPF. At 511–525 the chain is on the cytoplasmic side; that stretch reads SVTAEVTADSGGGQG. A helical transmembrane segment spans residues 526–546; that stretch reads LAIGVLNLAIVIPQMIVSLGA. The Extracellular portion of the chain corresponds to 547 to 555; that stretch reads GPWDQLFGG. Residues 556–576 traverse the membrane as a helical segment; it reads GNLPAFVLASVAAFAAGVIAL. Residues 577–594 are Cytoplasmic-facing; that stretch reads QRLPTLSSSFKSTGFHIG.

The protein belongs to the glycoside-pentoside-hexuronide (GPH) cation symporter transporter (TC 2.A.2.4) family. In terms of assembly, homodimer. Interacts with SUC2 and SUC4. In terms of tissue distribution, mostly localized in parenchymatic cells next to vascular tissues (at protein level). Present in stipules, trichomes, hydathodes and guard cells of source leaves, as well as in lateral root tips and flowers.

The protein resides in the cell membrane. It catalyses the reaction sucrose(out) + H(+)(out) = sucrose(in) + H(+)(in). Its pathway is glycan biosynthesis; sucrose metabolism. With respect to regulation, inhibited by protonophores (e.g. dinitrophenol and carbonyl cyanide m-chlorophenyl-hydrazone (CCCP)) and SH group inhibitors (e.g. p-chloromercuribenzene sulphonic acid (PCMBS)). Responsible for the transport of sucrose into the cell, with the concomitant uptake of protons (symport system). Can also transport maltose at a lesser rate. May also transport biotin. Probably involved in carpel maturation that leads to pod shatter and seed dispersal. The chain is Sucrose transport protein SUC3 from Arabidopsis thaliana (Mouse-ear cress).